Here is a 387-residue protein sequence, read N- to C-terminus: [LysW]-aminoadipate semialdehyde/glutamate semialdehyde transaminase (387 aa).

Pyridoxal 5'-phosphate-binding positions include 96–97 and phenylalanine 123; that span reads GT. Substrate is bound at residue arginine 126. Residue 207–210 coordinates pyridoxal 5'-phosphate; that stretch reads DEVQ. Lysine 236 is subject to N6-(pyridoxal phosphate)lysine. Serine 264 contributes to the substrate binding site. Threonine 265 is a binding site for pyridoxal 5'-phosphate.

It belongs to the class-III pyridoxal-phosphate-dependent aminotransferase family. LysJ subfamily. As to quaternary structure, homodimer. Requires pyridoxal 5'-phosphate as cofactor.

Its subcellular location is the cytoplasm. The catalysed reaction is [amino-group carrier protein]-C-terminal-gamma-(L-lysyl)-L-glutamate + 2-oxoglutarate = [amino-group carrier protein]-C-terminal-N-(1-carboxy-5-oxopentan-1-yl)-L-glutamine + L-glutamate. The enzyme catalyses [amino-group carrier protein]-C-terminal-gamma-(L-ornithyl)-L-glutamate + 2-oxoglutarate = [amino-group carrier protein]-C-terminal-gamma-(L-glutamyl-5-semialdehyde)-L-glutamate + L-glutamate. The protein operates within amino-acid biosynthesis; L-lysine biosynthesis via AAA pathway; L-lysine from L-alpha-aminoadipate (Thermus route): step 4/5. Its pathway is amino-acid biosynthesis; L-arginine biosynthesis. Its function is as follows. Involved in both the arginine and lysine biosynthetic pathways. The polypeptide is [LysW]-aminoadipate semialdehyde/glutamate semialdehyde transaminase (Sulfurisphaera tokodaii (strain DSM 16993 / JCM 10545 / NBRC 100140 / 7) (Sulfolobus tokodaii)).